A 452-amino-acid polypeptide reads, in one-letter code: MELKNKKILVVGLAKTGVAVARFLAKAGAFVTVTDMREEEALADVLAELSDLDITYELGRHVPYSFLMADLIVVSPGVPMDIKPLEMARSQKRRVVSEVELASWFIKAPMVAITGTNGKTTTTTLTGEIFKACGFETFVGGNIGNPLIELAESGQEVARVVVELSSFQLEGVESFRPDVAVLLNITEDHLDRYHSFQEYIDAKLRIFENQTADDFAVLNIDDPLVAACASKLKAQLFPMSRLHELEEGISYRDGFITFSHKGKVLRFGTEGFKLKGVHNLDNIMASLASTLLMRCDGDCAYEAVKSFKGLPHRMELVEEIDGVAYYEDSKGTNVGSVVKSLESFDSGITLIAGGKDKGGSYEPLAPLVESRVSHLVLIGEAKARMQQALGSLTDTHEAQTLEEAVEIARRLTKPGGVVLFSPACSSFDMFKNYEERAERFKAAVRAGKKGEA.

115–121 (GTNGKTT) is an ATP binding site.

Belongs to the MurCDEF family.

It is found in the cytoplasm. The enzyme catalyses UDP-N-acetyl-alpha-D-muramoyl-L-alanine + D-glutamate + ATP = UDP-N-acetyl-alpha-D-muramoyl-L-alanyl-D-glutamate + ADP + phosphate + H(+). It functions in the pathway cell wall biogenesis; peptidoglycan biosynthesis. Its function is as follows. Cell wall formation. Catalyzes the addition of glutamate to the nucleotide precursor UDP-N-acetylmuramoyl-L-alanine (UMA). This is UDP-N-acetylmuramoylalanine--D-glutamate ligase from Geobacter sp. (strain M21).